The sequence spans 409 residues: Elongation factor Tu (409 aa).

The tr-type G domain occupies 10 to 214; sequence KPHVNIGTIG…AVDSYIPTPE (205 aa). Residues 19-26 are G1; it reads GHVDHGKT. 19 to 26 is a GTP binding site; it reads GHVDHGKT. Mg(2+) is bound at residue T26. A G2 region spans residues 60–64; it reads GITIN. Residues 81–84 form a G3 region; it reads DCPG. Residues 81 to 85 and 136 to 139 each bind GTP; these read DCPGH and NKKD. Residues 136–139 are G4; that stretch reads NKKD. Positions 174–176 are G5; that stretch reads SAK.

Belongs to the TRAFAC class translation factor GTPase superfamily. Classic translation factor GTPase family. EF-Tu/EF-1A subfamily. In terms of assembly, monomer.

The protein localises to the cytoplasm. It carries out the reaction GTP + H2O = GDP + phosphate + H(+). Functionally, GTP hydrolase that promotes the GTP-dependent binding of aminoacyl-tRNA to the A-site of ribosomes during protein biosynthesis. The sequence is that of Elongation factor Tu from Microcystis aeruginosa (strain NIES-843 / IAM M-2473).